A 463-amino-acid chain; its full sequence is Glutamate--tRNA ligase 2 (463 aa).

The 'HIGH' region signature appears at 11-21 (PSPTGYLHIGG). Positions 240–244 (KLSKR) match the 'KMSKS' region motif. Lys-243 contacts ATP.

This sequence belongs to the class-I aminoacyl-tRNA synthetase family. Glutamate--tRNA ligase type 1 subfamily. In terms of assembly, monomer.

It localises to the cytoplasm. It carries out the reaction tRNA(Glu) + L-glutamate + ATP = L-glutamyl-tRNA(Glu) + AMP + diphosphate. Catalyzes the attachment of glutamate to tRNA(Glu) in a two-step reaction: glutamate is first activated by ATP to form Glu-AMP and then transferred to the acceptor end of tRNA(Glu). The sequence is that of Glutamate--tRNA ligase 2 from Campylobacter jejuni (strain RM1221).